A 322-amino-acid polypeptide reads, in one-letter code: (12E)-labda-8(17),12,14-triene synthase (322 aa).

Residues 1-11 (MNDATRTSTTP) are compositionally biased toward polar residues. The disordered stretch occupies residues 1–26 (MNDATRTSTTPPALPMPDLRDSFPGP). Mg(2+)-binding residues include Asp93 and Glu98. A DDXXXE motif motif is present at residues 93–98 (DDAHGE). Arg188 is a binding site for substrate. Positions 234 and 238 each coordinate Mg(2+). The NXXXSXXXE motif motif lies at 234 to 242 (NDLASYAKE). Lys241 contacts substrate. A Mg(2+)-binding site is contributed by Glu242. Position 319–320 (319–320 (RY)) interacts with substrate.

This sequence belongs to the terpene synthase family. Requires Mg(2+) as cofactor.

It carries out the reaction (+)-copalyl diphosphate = (12E)-labda-8(17),12,14-triene + diphosphate. In terms of biological role, involved in the biosynthesis of the labdane-type bicyclic diterpene labda-8(17),12(E),14-triene. Catalyzes the conversion of (+)-copalyl diphosphate to yield labda-8(17),12(E),14-triene. In Streptomyces anulatus (Streptomyces chrysomallus), this protein is (12E)-labda-8(17),12,14-triene synthase.